We begin with the raw amino-acid sequence, 430 residues long: Tol-Pal system protein TolB (430 aa).

A signal peptide spans 1-21; the sequence is MKQALRVAFGFLMLWAAVLHA.

Belongs to the TolB family. In terms of assembly, the Tol-Pal system is composed of five core proteins: the inner membrane proteins TolA, TolQ and TolR, the periplasmic protein TolB and the outer membrane protein Pal. They form a network linking the inner and outer membranes and the peptidoglycan layer.

The protein localises to the periplasm. Part of the Tol-Pal system, which plays a role in outer membrane invagination during cell division and is important for maintaining outer membrane integrity. TolB occupies a key intermediary position in the Tol-Pal system because it communicates directly with both membrane-embedded components, Pal in the outer membrane and TolA in the inner membrane. In Klebsiella pneumoniae (strain 342), this protein is Tol-Pal system protein TolB.